A 324-amino-acid polypeptide reads, in one-letter code: dITP/XTP pyrophosphatase (324 aa).

The unknown stretch occupies residues 1–126 (MTKSIFEYKD…SDNKSDFGDV (126 aa)). Residues 127–324 (LLIATRNEGK…EVFPAWQNKQ (198 aa)) are NTP pyrophosphatase. 131–136 (TRNEGK) contacts substrate. The active-site Proton acceptor is Asp-193. Asp-193 is a Mg(2+) binding site. Residues Ser-194, 277–280 (FGYD), Lys-300, and 305–306 (HR) contribute to the substrate site.

This sequence belongs to the HAM1 NTPase family. In terms of assembly, homodimer. Requires Mg(2+) as cofactor.

It catalyses the reaction XTP + H2O = XMP + diphosphate + H(+). The catalysed reaction is dITP + H2O = dIMP + diphosphate + H(+). It carries out the reaction ITP + H2O = IMP + diphosphate + H(+). Its function is as follows. Pyrophosphatase that catalyzes the hydrolysis of nucleoside triphosphates to their monophosphate derivatives, with a high preference for the non-canonical purine nucleotides XTP (xanthosine triphosphate), dITP (deoxyinosine triphosphate) and ITP. Seems to function as a house-cleaning enzyme that removes non-canonical purine nucleotides from the nucleotide pool, thus preventing their incorporation into DNA/RNA and avoiding chromosomal lesions. The chain is dITP/XTP pyrophosphatase from Streptococcus thermophilus (strain ATCC BAA-250 / LMG 18311).